Reading from the N-terminus, the 66-residue chain is RQERLAKLFTEAVRRWDVSFTENLPDYMKELVSFFRKGWEDYLLGYYEEAEWLAAEYVPSLDEYIK.

Belongs to the terpene synthase family. Tpsd subfamily. Requires Mn(2+) as cofactor. K(+) serves as cofactor.

The protein resides in the cytoplasm. It catalyses the reaction (2E,6E)-farnesyl diphosphate = (E,R)-alpha-bisabolene + diphosphate. The protein operates within terpene metabolism; oleoresin biosynthesis. Functionally, involved in defensive oleoresin formation in conifers in response to insect attack or other injury. Involved in sesquiterpene (C15) olefins biosynthesis. This Pseudotsuga menziesii (Douglas-fir) protein is Alpha-bisabolene synthase.